Here is a 453-residue protein sequence, read N- to C-terminus: Pre-mRNA-splicing factor prp46 (453 aa).

The segment covering 62 to 71 (EKQAKAAAAG) has biased composition (low complexity). The disordered stretch occupies residues 62-129 (EKQAKAAAAG…PSATRQQRPD (68 aa)). WD repeat units follow at residues 142-181 (GHLG…LRLT), 184-223 (GHIS…VIRH), 226-265 (GHLS…NIHV), 268-309 (GHKG…GVLT), 311-350 (HKKG…QNFE), 351-389 (GHNA…KFQS), and 400-439 (DAEA…TPES). A disordered region spans residues 432–453 (DDEATPESHPVTWAPTLGRQRY).

Belongs to the WD repeat PRL1/PRL2 family. Associated with the spliceosome.

Its subcellular location is the cytoplasm. It localises to the nucleus. Involved in pre-mRNA splicing and required for cell cycle progression at G2/M. The sequence is that of Pre-mRNA-splicing factor prp46 (prp46) from Aspergillus fumigatus (strain ATCC MYA-4609 / CBS 101355 / FGSC A1100 / Af293) (Neosartorya fumigata).